The primary structure comprises 119 residues: Ribonuclease P protein component (119 aa).

Belongs to the RnpA family. In terms of assembly, consists of a catalytic RNA component (M1 or rnpB) and a protein subunit.

The enzyme catalyses Endonucleolytic cleavage of RNA, removing 5'-extranucleotides from tRNA precursor.. Its function is as follows. RNaseP catalyzes the removal of the 5'-leader sequence from pre-tRNA to produce the mature 5'-terminus. It can also cleave other RNA substrates such as 4.5S RNA. The protein component plays an auxiliary but essential role in vivo by binding to the 5'-leader sequence and broadening the substrate specificity of the ribozyme. This Listeria monocytogenes serotype 4b (strain CLIP80459) protein is Ribonuclease P protein component.